The sequence spans 367 residues: Alginate lyase (367 aa).

The signal sequence occupies residues 1–24 (MTIINRKTAPALLALALFGGAAQA). Substrate-binding positions include 63-64 (SK), 136-137 (HT), and tyrosine 254.

This sequence belongs to the polysaccharide lyase 5 family.

The protein localises to the periplasm. The enzyme catalyses Eliminative cleavage of alginate to give oligosaccharides with 4-deoxy-alpha-L-erythro-hex-4-enuronosyl groups at their non-reducing ends and beta-D-mannuronate at their reducing end.. Its function is as follows. Catalyzes the depolymerization of alginate by cleaving the beta-1,4 glycosidic bond between two adjacent sugar residues via a beta-elimination mechanism. May serve to degrade mislocalized alginate that is trapped in the periplasmic space. In Pseudomonas entomophila (strain L48), this protein is Alginate lyase.